The sequence spans 329 residues: Gut-specific cysteine proteinase (329 aa).

An N-terminal signal peptide occupies residues 1–15; sequence MKFLILTALCAVTLA. Residues 16–84 constitute a propeptide, activation peptide; the sequence is FVPINHQSAV…ATEQEVVLAS (69 aa). Intrachain disulfides connect C98-C127, C110-C155, C146-C204, C147-C151, C183-C208, and C191-C196. Residue C113 is part of the active site. Active-site residues include H275 and N295.

This sequence belongs to the peptidase C1 family. In terms of tissue distribution, larvae exhibit strong expression in gut cells and weak expression in hypodermal cells. Adults exhibit the reverse: strong expression in hypodermal cells and weaker expression in gut cells.

Thiol protease. Has a role as a digestive enzyme. This Caenorhabditis elegans protein is Gut-specific cysteine proteinase (cpr-1).